A 407-amino-acid polypeptide reads, in one-letter code: Arginine deiminase (407 aa).

The active-site Amidino-cysteine intermediate is the Cys397.

The protein belongs to the arginine deiminase family.

The protein localises to the cytoplasm. It carries out the reaction L-arginine + H2O = L-citrulline + NH4(+). Its pathway is amino-acid degradation; L-arginine degradation via ADI pathway; carbamoyl phosphate from L-arginine: step 1/2. This chain is Arginine deiminase, found in Vibrio cholerae serotype O1 (strain ATCC 39541 / Classical Ogawa 395 / O395).